A 393-amino-acid chain; its full sequence is Stearoyl-[acyl-carrier-protein] 9-desaturase, chloroplastic (393 aa).

The N-terminal 31 residues, 1-31, are a transit peptide targeting the chloroplast; that stretch reads MASMVAFRPEAFLCFSPPKTTRSTRSPRISM. Fe cation is bound by residues glutamate 135, glutamate 173, histidine 176, glutamate 226, glutamate 259, and histidine 262.

This sequence belongs to the fatty acid desaturase type 2 family. As to quaternary structure, homodimer. The cofactor is Fe(2+).

It localises to the plastid. Its subcellular location is the chloroplast. The enzyme catalyses octadecanoyl-[ACP] + 2 reduced [2Fe-2S]-[ferredoxin] + O2 + 2 H(+) = (9Z)-octadecenoyl-[ACP] + 2 oxidized [2Fe-2S]-[ferredoxin] + 2 H2O. Its pathway is lipid metabolism; fatty acid metabolism. In terms of biological role, converts stearoyl-ACP to oleoyl-ACP by introduction of a cis double bond between carbons 9 and 10 of the acyl chain. This chain is Stearoyl-[acyl-carrier-protein] 9-desaturase, chloroplastic, found in Elaeis guineensis var. tenera (Oil palm).